Consider the following 367-residue polypeptide: S-adenosylmethionine decarboxylase proenzyme 3 (367 aa).

Residues Glu9 and Glu12 contribute to the active site. Ser69 serves as the catalytic Schiff-base intermediate with substrate; via pyruvic acid. A Pyruvic acid (Ser); by autocatalysis modification is found at Ser69. Cys83 acts as the Proton donor; for catalytic activity in catalysis. Residues Ser234 and His247 each act as proton acceptor; for processing activity in the active site.

This sequence belongs to the eukaryotic AdoMetDC family. Pyruvate is required as a cofactor. In terms of processing, is synthesized initially as an inactive proenzyme. Formation of the active enzyme involves a self-maturation process in which the active site pyruvoyl group is generated from an internal serine residue via an autocatalytic post-translational modification. Two non-identical subunits are generated from the proenzyme in this reaction, and the pyruvate is formed at the N-terminus of the alpha chain, which is derived from the carboxyl end of the proenzyme. The post-translation cleavage follows an unusual pathway, termed non-hydrolytic serinolysis, in which the side chain hydroxyl group of the serine supplies its oxygen atom to form the C-terminus of the beta chain, while the remainder of the serine residue undergoes an oxidative deamination to produce ammonia and the pyruvoyl group blocking the N-terminus of the alpha chain.

It carries out the reaction S-adenosyl-L-methionine + H(+) = S-adenosyl 3-(methylsulfanyl)propylamine + CO2. The protein operates within amine and polyamine biosynthesis; S-adenosylmethioninamine biosynthesis; S-adenosylmethioninamine from S-adenosyl-L-methionine: step 1/1. In Brassica juncea (Indian mustard), this protein is S-adenosylmethionine decarboxylase proenzyme 3 (SAMDC3).